A 410-amino-acid chain; its full sequence is Multifunctional CCA protein (410 aa).

The ATP site is built by glycine 8 and arginine 11. Residues glycine 8 and arginine 11 each contribute to the CTP site. Positions 21 and 23 each coordinate Mg(2+). ATP-binding residues include arginine 91, arginine 137, and arginine 140. Arginine 91, arginine 137, and arginine 140 together coordinate CTP. The HD domain maps to 225-326; it reads SGIHTLMTLQ…LNVLKKTDAF (102 aa).

The protein belongs to the tRNA nucleotidyltransferase/poly(A) polymerase family. Bacterial CCA-adding enzyme type 1 subfamily. Monomer. Can also form homodimers and oligomers. Requires Mg(2+) as cofactor. Ni(2+) is required as a cofactor.

The catalysed reaction is a tRNA precursor + 2 CTP + ATP = a tRNA with a 3' CCA end + 3 diphosphate. The enzyme catalyses a tRNA with a 3' CCA end + 2 CTP + ATP = a tRNA with a 3' CCACCA end + 3 diphosphate. Catalyzes the addition and repair of the essential 3'-terminal CCA sequence in tRNAs without using a nucleic acid template. Adds these three nucleotides in the order of C, C, and A to the tRNA nucleotide-73, using CTP and ATP as substrates and producing inorganic pyrophosphate. tRNA 3'-terminal CCA addition is required both for tRNA processing and repair. Also involved in tRNA surveillance by mediating tandem CCA addition to generate a CCACCA at the 3' terminus of unstable tRNAs. While stable tRNAs receive only 3'-terminal CCA, unstable tRNAs are marked with CCACCA and rapidly degraded. This is Multifunctional CCA protein from Neisseria gonorrhoeae (strain ATCC 700825 / FA 1090).